A 258-amino-acid polypeptide reads, in one-letter code: HVA22-like protein j (258 aa).

The interval alanine 153–alanine 258 is disordered. Residues glutamine 156 to serine 169 show a composition bias toward polar residues. A compositionally biased stretch (pro residues) spans tryptophan 206–proline 215.

The protein belongs to the DP1 family.

This chain is HVA22-like protein j (HVA22J), found in Arabidopsis thaliana (Mouse-ear cress).